Consider the following 142-residue polypeptide: Large ribosomal subunit protein uL13 (142 aa).

Belongs to the universal ribosomal protein uL13 family. Part of the 50S ribosomal subunit.

This protein is one of the early assembly proteins of the 50S ribosomal subunit, although it is not seen to bind rRNA by itself. It is important during the early stages of 50S assembly. The chain is Large ribosomal subunit protein uL13 from Tolumonas auensis (strain DSM 9187 / NBRC 110442 / TA 4).